A 98-amino-acid chain; its full sequence is Large ribosomal subunit protein uL23 (98 aa).

It belongs to the universal ribosomal protein uL23 family. In terms of assembly, part of the 50S ribosomal subunit. Contacts protein L29, and trigger factor when it is bound to the ribosome.

Its function is as follows. One of the early assembly proteins it binds 23S rRNA. One of the proteins that surrounds the polypeptide exit tunnel on the outside of the ribosome. Forms the main docking site for trigger factor binding to the ribosome. This Rickettsia bellii (strain OSU 85-389) protein is Large ribosomal subunit protein uL23.